Reading from the N-terminus, the 968-residue chain is C-1-tetrahydrofolate synthase, cytoplasmic (968 aa).

The tract at residues 1 to 338 is methylenetetrahydrofolate dehydrogenase and cyclohydrolase; sequence MSAQYQRFLK…ERLAKSQWAL (338 aa). Substrate contacts are provided by residues 86 to 90 and 133 to 135; these read YIRMK and VQM. Residues 205 to 207 and Ser-230 each bind NADP(+); that span reads GRS. 305–309 contacts substrate; the sequence is PGGVG. Residues 339–968 are formyltetrahydrofolate synthetase; it reads QTLPLKPQRP…TETGEIEGLF (630 aa). 413–420 provides a ligand contact to ATP; sequence TPLGEGKT.

This sequence in the N-terminal section; belongs to the tetrahydrofolate dehydrogenase/cyclohydrolase family. It in the C-terminal section; belongs to the formate--tetrahydrofolate ligase family. In terms of assembly, homodimer. Present in all tissues.

It localises to the cytoplasm. The catalysed reaction is (6R)-5,10-methylene-5,6,7,8-tetrahydrofolate + NADP(+) = (6R)-5,10-methenyltetrahydrofolate + NADPH. It carries out the reaction (6R)-5,10-methenyltetrahydrofolate + H2O = (6R)-10-formyltetrahydrofolate + H(+). It catalyses the reaction (6S)-5,6,7,8-tetrahydrofolate + formate + ATP = (6R)-10-formyltetrahydrofolate + ADP + phosphate. Its pathway is one-carbon metabolism; tetrahydrofolate interconversion. This is C-1-tetrahydrofolate synthase, cytoplasmic (pug) from Drosophila melanogaster (Fruit fly).